We begin with the raw amino-acid sequence, 750 residues long: Photosystem I P700 chlorophyll a apoprotein A1 (750 aa).

Transmembrane regions (helical) follow at residues 70-93 (VFSAHFGQLSIIFLWLSGMYFHGA), 156-179 (LYCTAIGALIFAALMLFAGWFHYH), 195-219 (LNHHLAGLLGLGSLSWAGHQVHVSL), 291-309 (IAHHHLAIAILFLIAGHMY), 346-369 (WHAQLSLNLAMLGSLTIIVAHHMY), 385-411 (LSLFTHHMWIGGFLIVGAAAHAAIFMV), 433-455 (AIISHLNWACIFLGFHSFGLYIH), and 531-549 (FLVHHIHAFTIHVTVLILL). Positions 573 and 582 each coordinate [4Fe-4S] cluster. 2 helical membrane passes run 589-610 (HVFLGLFWMYNAISVVIFHFSW) and 664-686 (LSAYGLFFLGAHFVWAFSLMFLF). H675 is a chlorophyll a' binding site. Positions 683 and 691 each coordinate chlorophyll a. Residue W692 participates in phylloquinone binding. Residues 724-744 (AVGVTHYLLGGIATTWAFFLA) traverse the membrane as a helical segment.

The protein belongs to the PsaA/PsaB family. The PsaA/B heterodimer binds the P700 chlorophyll special pair and subsequent electron acceptors. PSI consists of a core antenna complex that captures photons, and an electron transfer chain that converts photonic excitation into a charge separation. The eukaryotic PSI reaction center is composed of at least 11 subunits. The cofactor is P700 is a chlorophyll a/chlorophyll a' dimer, A0 is one or more chlorophyll a, A1 is one or both phylloquinones and FX is a shared 4Fe-4S iron-sulfur center..

Its subcellular location is the plastid. It localises to the chloroplast thylakoid membrane. The enzyme catalyses reduced [plastocyanin] + hnu + oxidized [2Fe-2S]-[ferredoxin] = oxidized [plastocyanin] + reduced [2Fe-2S]-[ferredoxin]. Functionally, psaA and PsaB bind P700, the primary electron donor of photosystem I (PSI), as well as the electron acceptors A0, A1 and FX. PSI is a plastocyanin-ferredoxin oxidoreductase, converting photonic excitation into a charge separation, which transfers an electron from the donor P700 chlorophyll pair to the spectroscopically characterized acceptors A0, A1, FX, FA and FB in turn. Oxidized P700 is reduced on the lumenal side of the thylakoid membrane by plastocyanin. This chain is Photosystem I P700 chlorophyll a apoprotein A1, found in Daucus carota (Wild carrot).